A 382-amino-acid chain; its full sequence is Flap endonuclease 1 (382 aa).

Residues 1 to 104 (MGIKGLSQVI…GELEKRTERR (104 aa)) are N-domain. D34 provides a ligand contact to Mg(2+). The DNA site is built by R47 and R70. D86, E158, E160, D179, and D181 together coordinate Mg(2+). Positions 122 to 253 (EAEKFERRLV…KKAVELIKQH (132 aa)) are I-domain. A DNA-binding site is contributed by E158. 2 residues coordinate DNA: G231 and D233. Mg(2+) is bound at residue D233. Residues 336–344 (TQGRIDSFF) are interaction with PCNA. Residues 359–368 (KAQEEAEKMK) are compositionally biased toward basic and acidic residues. The interval 359–382 (KAQEEAEKMKKGGKKSGPPKKKAK) is disordered. Residues 369–382 (KGGKKSGPPKKKAK) show a composition bias toward basic residues.

This sequence belongs to the XPG/RAD2 endonuclease family. FEN1 subfamily. In terms of assembly, interacts with PCNA. Three molecules of crn-1 bind to one PCNA trimer with each molecule binding to one PCNA monomer. PCNA stimulates the nuclease activity without altering cleavage specificity. It depends on Mg(2+) as a cofactor. Post-translationally, phosphorylated. Phosphorylation upon DNA damage induces relocalization to the nuclear plasma.

The protein localises to the nucleus. The protein resides in the nucleolus. Its subcellular location is the nucleoplasm. It is found in the mitochondrion. Its function is as follows. Structure-specific nuclease with 5'-flap endonuclease and 5'-3' exonuclease activities involved in DNA replication and repair. During DNA replication, cleaves the 5'-overhanging flap structure that is generated by displacement synthesis when DNA polymerase encounters the 5'-end of a downstream Okazaki fragment. It enters the flap from the 5'-end and then tracks to cleave the flap base, leaving a nick for ligation. Also involved in the long patch base excision repair (LP-BER) pathway, by cleaving within the apurinic/apyrimidinic (AP) site-terminated flap. Acts as a genome stabilization factor that prevents flaps from equilibrating into structures that lead to duplications and deletions. Also possesses 5'-3' exonuclease activity on nicked or gapped double-stranded DNA, and exhibits RNase H activity. Also involved in replication and repair of rDNA and in repairing mitochondrial DNA. The sequence is that of Flap endonuclease 1 from Caenorhabditis briggsae.